Reading from the N-terminus, the 402-residue chain is Putative polyketide beta-ketoacyl synthase 2 (402 aa).

Disordered stretches follow at residues 1–30 and 188–222; these read MTPV…WAPR and VEPR…FDRD. The region spanning 1 to 400 is the Ketosynthase family 3 (KS3) domain; that stretch reads MTPVAVTGMG…GFNSALVVRA (400 aa). A compositionally biased stretch (low complexity) spans 192 to 205; sequence SAPGAGSPSSPAGG.

This sequence belongs to the thiolase-like superfamily. Beta-ketoacyl-ACP synthases family.

Its pathway is antifungal biosynthesis; monensin biosynthesis. The polypeptide is Putative polyketide beta-ketoacyl synthase 2 (Streptomyces virginiae (Streptomyces cinnamonensis)).